The primary structure comprises 396 residues: Elongation factor Tu-B (396 aa).

One can recognise a tr-type G domain in the interval 10–206 (KLHVNVGTIG…ALDTFIPDPT (197 aa)). The interval 19 to 26 (GHVDHGKT) is G1. Residue 19-26 (GHVDHGKT) coordinates GTP. Threonine 26 contributes to the Mg(2+) binding site. The tract at residues 60–64 (GITIS) is G2. Residues 81–84 (DCPG) are G3. GTP contacts are provided by residues 81–85 (DCPGH) and 136–139 (NKAD). The tract at residues 136-139 (NKAD) is G4. Positions 174–176 (SAR) are G5.

This sequence belongs to the TRAFAC class translation factor GTPase superfamily. Classic translation factor GTPase family. EF-Tu/EF-1A subfamily. In terms of assembly, monomer.

It localises to the cytoplasm. The enzyme catalyses GTP + H2O = GDP + phosphate + H(+). In terms of biological role, GTP hydrolase that promotes the GTP-dependent binding of aminoacyl-tRNA to the A-site of ribosomes during protein biosynthesis. This is Elongation factor Tu-B from Xanthomonas campestris pv. campestris (strain ATCC 33913 / DSM 3586 / NCPPB 528 / LMG 568 / P 25).